A 229-amino-acid polypeptide reads, in one-letter code: Potassium/proton antiporter CemA (229 aa).

The next 4 membrane-spanning stretches (helical) occupy residues 7-27, 114-134, 154-174, and 189-209; these read FTPL…SLSF, IICF…LVIL, ILLL…ELMV, and IISG…KYWI.

It belongs to the CemA family.

Its subcellular location is the plastid. The protein resides in the chloroplast inner membrane. It carries out the reaction K(+)(in) + H(+)(out) = K(+)(out) + H(+)(in). Contributes to K(+)/H(+) antiport activity by supporting proton efflux to control proton extrusion and homeostasis in chloroplasts in a light-dependent manner to modulate photosynthesis. Prevents excessive induction of non-photochemical quenching (NPQ) under continuous-light conditions. Indirectly promotes efficient inorganic carbon uptake into chloroplasts. This chain is Potassium/proton antiporter CemA, found in Coffea arabica (Arabian coffee).